Consider the following 141-residue polypeptide: Large ribosomal subunit protein uL11c (141 aa).

This sequence belongs to the universal ribosomal protein uL11 family. As to quaternary structure, part of the ribosomal stalk of the 50S ribosomal subunit. Interacts with L10 and the large rRNA to form the base of the stalk. L10 forms an elongated spine to which L12 dimers bind in a sequential fashion forming a multimeric L10(L12)X complex.

The protein localises to the plastid. It localises to the chloroplast. Its function is as follows. Forms part of the ribosomal stalk which helps the ribosome interact with GTP-bound translation factors. The polypeptide is Large ribosomal subunit protein uL11c (Pyropia yezoensis (Susabi-nori)).